The primary structure comprises 479 residues: F-box/LRR-repeat protein 16 (479 aa).

The interval 1-62 (MSSPGIDGDP…PTLPPPSLAA (62 aa)) is disordered. Over residues 47–60 (CQPPPPPTLPPPSL) the composition is skewed to pro residues. An Omega-N-methylarginine modification is found at Arg-92. Residues 94 to 139 (PLATDEKILNGLFWYFSACEKCVLAQVCKAWRRVLYQPKFWAGLTP) form the F-box domain. LRR repeat units follow at residues 244–266 (ITSL…ISQL), 267–290 (LPNL…YFTA), 319–343 (LPNL…LVAE), 345–369 (LRKL…YVAC), 371–395 (LHRL…YLST), 396–420 (MSSL…HLLA), and 446–470 (LQEL…YFSQ).

Interacts with SKP1 and CUL1.

In terms of biological role, substrate-recognition component of the SCF (SKP1-CUL1-F-box protein)-type E3 ubiquitin ligase complex. The chain is F-box/LRR-repeat protein 16 (FBXL16) from Homo sapiens (Human).